The sequence spans 89 residues: Small ribosomal subunit protein uS15 (89 aa).

This sequence belongs to the universal ribosomal protein uS15 family. As to quaternary structure, part of the 30S ribosomal subunit. Forms a bridge to the 50S subunit in the 70S ribosome, contacting the 23S rRNA.

Its function is as follows. One of the primary rRNA binding proteins, it binds directly to 16S rRNA where it helps nucleate assembly of the platform of the 30S subunit by binding and bridging several RNA helices of the 16S rRNA. Functionally, forms an intersubunit bridge (bridge B4) with the 23S rRNA of the 50S subunit in the ribosome. The chain is Small ribosomal subunit protein uS15 from Exiguobacterium sibiricum (strain DSM 17290 / CCUG 55495 / CIP 109462 / JCM 13490 / 255-15).